Reading from the N-terminus, the 479-residue chain is Aspartyl/glutamyl-tRNA(Asn/Gln) amidotransferase subunit B (479 aa).

Belongs to the GatB/GatE family. GatB subfamily. As to quaternary structure, heterotrimer of A, B and C subunits.

The catalysed reaction is L-glutamyl-tRNA(Gln) + L-glutamine + ATP + H2O = L-glutaminyl-tRNA(Gln) + L-glutamate + ADP + phosphate + H(+). It catalyses the reaction L-aspartyl-tRNA(Asn) + L-glutamine + ATP + H2O = L-asparaginyl-tRNA(Asn) + L-glutamate + ADP + phosphate + 2 H(+). Functionally, allows the formation of correctly charged Asn-tRNA(Asn) or Gln-tRNA(Gln) through the transamidation of misacylated Asp-tRNA(Asn) or Glu-tRNA(Gln) in organisms which lack either or both of asparaginyl-tRNA or glutaminyl-tRNA synthetases. The reaction takes place in the presence of glutamine and ATP through an activated phospho-Asp-tRNA(Asn) or phospho-Glu-tRNA(Gln). The sequence is that of Aspartyl/glutamyl-tRNA(Asn/Gln) amidotransferase subunit B from Clostridium beijerinckii (strain ATCC 51743 / NCIMB 8052) (Clostridium acetobutylicum).